The sequence spans 594 residues: Lipolysis-stimulated lipoprotein receptor (594 aa).

The first 35 residues, 1–35 (MAPAASACAGAPGSHPATTIFVCLFLIIYCPDRAS), serve as a signal peptide directing secretion. Residues 36-206 (AIQVTVPDPY…PGFRAGPLED (171 aa)) lie on the Extracellular side of the membrane. The region spanning 89–181 (PASVDNQLNA…DLDGNNEAYA (93 aa)) is the Ig-like V-type domain. A disulfide bond links cysteine 113 and cysteine 165. A helical membrane pass occupies residues 207–227 (WLFVVVVCLASLLFFLLLGIC). The Cytoplasmic portion of the chain corresponds to 228 to 594 (WCQCCPHTCC…LALSRESLVV (367 aa)). Residue threonine 283 is modified to Phosphothreonine. Serine 308 is modified (phosphoserine; by MAPK8 and MAPK9). Phosphoserine is present on residues serine 314, serine 332, serine 375, and serine 379. Basic and acidic residues predominate over residues 375-387 (SEVTSLHEDDWRS). The disordered stretch occupies residues 375–594 (SEVTSLHEDD…LALSRESLVV (220 aa)). The residue at position 396 (threonine 396) is a Phosphothreonine. Phosphoserine is present on residues serine 407, serine 410, and serine 436. Residues 435 to 444 (RSVDALDDIN) are compositionally biased toward basic and acidic residues. Positions 445–460 (RPGSTESGRSSPPSSG) are enriched in low complexity. Serine 471 and serine 473 each carry phosphoserine. The segment covering 472 to 550 (RSRDDLYDPD…GAGERRRVYR (79 aa)) has biased composition (basic and acidic residues). Position 478 is a phosphotyrosine (tyrosine 478). Serine 576 bears the Phosphoserine mark. Lysine 583 participates in a covalent cross-link: Glycyl lysine isopeptide (Lys-Gly) (interchain with G-Cter in ubiquitin). 2 positions are modified to phosphoserine: serine 588 and serine 591.

The protein belongs to the immunoglobulin superfamily. LISCH7 family. Homotrimer or homotetramer. Assembles into cell-cell contacts. Interacts (via the cytoplasmic domain) with MARVELD2 (via C-terminal cytoplasmic domain); the interaction is required to recruit MARVELD2 to tricellular contacts. Interacts with OCLN. Phosphorylation at Ser-308 by MAPK8/JNK1 and MAPK9/JNK2 may be required for exclusive localization at tricellular tight junstions. Post-translationally, polyubiquitinated at Lys-583 via 'Lys-63'-linked ubiquitin chains; deubiquitinated by USP53. In terms of tissue distribution, expressed in epithelial tissues (at protein level). Specifically expressed in liver and to a lower extent in kidney (at protein level). Also detected in brain, testis, ovaries, adrenal gland, intestine, muscle, and lung. In colon, only expressed in the lower portion of crypts. Expressed in the liver. As to expression, expressed in liver, stomach, small intestine and colon. Also detected in other epithelial tissues.

The protein localises to the cell membrane. Its subcellular location is the cell junction. It localises to the tight junction. Probable role in the clearance of triglyceride-rich lipoprotein from blood. Binds chylomicrons, LDL and VLDL in presence of free fatty acids and allows their subsequent uptake in the cells. Maintains epithelial barrier function by recruiting MARVELD2/tricellulin to tricellular tight junctions. In Mus musculus (Mouse), this protein is Lipolysis-stimulated lipoprotein receptor.